A 354-amino-acid polypeptide reads, in one-letter code: 3-dehydroquinate synthase (354 aa).

NAD(+)-binding positions include 66 to 71, 100 to 104, 124 to 125, Lys137, and Lys146; these read DGERYK, GVVGD, and TT. Zn(2+) is bound by residues Glu179, His242, and His259.

It belongs to the sugar phosphate cyclases superfamily. Dehydroquinate synthase family. Co(2+) is required as a cofactor. It depends on Zn(2+) as a cofactor. NAD(+) serves as cofactor.

Its subcellular location is the cytoplasm. It carries out the reaction 7-phospho-2-dehydro-3-deoxy-D-arabino-heptonate = 3-dehydroquinate + phosphate. It functions in the pathway metabolic intermediate biosynthesis; chorismate biosynthesis; chorismate from D-erythrose 4-phosphate and phosphoenolpyruvate: step 2/7. Functionally, catalyzes the conversion of 3-deoxy-D-arabino-heptulosonate 7-phosphate (DAHP) to dehydroquinate (DHQ). The chain is 3-dehydroquinate synthase from Halorhodospira halophila (strain DSM 244 / SL1) (Ectothiorhodospira halophila (strain DSM 244 / SL1)).